The chain runs to 175 residues: Translation initiation factor IF-3 (175 aa).

Belongs to the IF-3 family. As to quaternary structure, monomer.

The protein resides in the cytoplasm. Functionally, IF-3 binds to the 30S ribosomal subunit and shifts the equilibrium between 70S ribosomes and their 50S and 30S subunits in favor of the free subunits, thus enhancing the availability of 30S subunits on which protein synthesis initiation begins. The sequence is that of Translation initiation factor IF-3 from Staphylococcus aureus (strain MRSA252).